The chain runs to 529 residues: 56 kDa type-specific antigen (529 aa).

The N-terminal stretch at 1–22 (MKKIMLIASAMSALSLPFSASA) is a signal peptide. Residues 67 to 87 (LTTSMPFGGTLAAGMTIAPGF) traverse the membrane as a helical segment. The span at 106-116 (GKTGSDADIRS) shows a compositional bias: basic and acidic residues. Disordered regions lie at residues 106–134 (GKTG…PQPT) and 392–424 (DGGC…KGKE). A helical membrane pass occupies residues 477–492 (TGMVASGALGVAINAA).

It localises to the cell membrane. Its function is as follows. May be an adherent factor for rickettsial adsorption to the host-cell surface and a determinant of virulence of individual rickettsial strain. It is the major outer membrane protein. In Orientia tsutsugamushi (Rickettsia tsutsugamushi), this protein is 56 kDa type-specific antigen.